The sequence spans 503 residues: Ent-kaurene oxidase-like 5 (503 aa).

A helical transmembrane segment spans residues Gly-8 to Val-28. Residue Cys-448 coordinates heme.

This sequence belongs to the cytochrome P450 family. Heme serves as cofactor. In terms of tissue distribution, expressed in roots.

It localises to the membrane. In terms of biological role, may hydroxylate diterpenes. This Oryza sativa subsp. japonica (Rice) protein is Ent-kaurene oxidase-like 5.